The sequence spans 238 residues: ATP-dependent Clp protease ATP-binding subunit CLPT1, chloroplastic (238 aa).

Residues 1 to 64 (MASYTVSFIP…VPKLRCLTSA (64 aa)) constitute a chloroplast transit peptide. In terms of domain architecture, Clp R spans 83 to 228 (IPKWSARAIK…KEVEKSMNED (146 aa)). 2 repeat regions span residues 86-151 (WSAR…LGKS) and 163-228 (LTEP…MNED).

Belongs to the ClpA/ClpB family. In terms of assembly, monomer and homodimer. Binds to the CLP3-6 ring (P-ring). The dimers monomerize before association to the P-ring. Component of the chloroplastic Clp protease core complex which consist of at least 16 proteins: CLPP4 (3 copies), CLPP5 (3 copies), CLPR4 (2 copies), ClpP1 (1 copy), CLPP6 (1 copy), CLPR2 (1 copy), CLPT1 (1 copy), CLPT2 (1 copy) and 3 copies of CLPP3 and/or CLPR1 and/or CLPR3. Interacts with CLPC2 and CLPD. Interacts with CPN21. No interactions with CLPS1.

The protein resides in the plastid. The protein localises to the chloroplast. Accessory protein regulating the assembly of the plastidial Clp protease system. CLPT1 first binds to the heptameric P-ring containing the CLP3-6 subunits followed by CLPT2, and only then does the P-ring combine with the R-ring composed of the clpP1 and CLPR1-4 subunits. Once the core complex is fully assembled, it then associates to the CLPC chaperone partner to form the functional protease. CLPT1 and CLPT2 are partially redundant. In Arabidopsis thaliana (Mouse-ear cress), this protein is ATP-dependent Clp protease ATP-binding subunit CLPT1, chloroplastic.